A 382-amino-acid polypeptide reads, in one-letter code: Queuine tRNA-ribosyltransferase (382 aa).

D93 acts as the Proton acceptor in catalysis. Residues 93 to 97 (DSGGF), D147, Q191, and G218 each bind substrate. Residues 249–255 (GVGKPED) are RNA binding. D268 functions as the Nucleophile in the catalytic mechanism. The interval 273–277 (TRNAR) is RNA binding; important for wobble base 34 recognition. The Zn(2+) site is built by C306, C308, C311, and H337.

Belongs to the queuine tRNA-ribosyltransferase family. As to quaternary structure, homodimer. Within each dimer, one monomer is responsible for RNA recognition and catalysis, while the other monomer binds to the replacement base PreQ1. The cofactor is Zn(2+).

The enzyme catalyses 7-aminomethyl-7-carbaguanine + guanosine(34) in tRNA = 7-aminomethyl-7-carbaguanosine(34) in tRNA + guanine. The protein operates within tRNA modification; tRNA-queuosine biosynthesis. In terms of biological role, catalyzes the base-exchange of a guanine (G) residue with the queuine precursor 7-aminomethyl-7-deazaguanine (PreQ1) at position 34 (anticodon wobble position) in tRNAs with GU(N) anticodons (tRNA-Asp, -Asn, -His and -Tyr). Catalysis occurs through a double-displacement mechanism. The nucleophile active site attacks the C1' of nucleotide 34 to detach the guanine base from the RNA, forming a covalent enzyme-RNA intermediate. The proton acceptor active site deprotonates the incoming PreQ1, allowing a nucleophilic attack on the C1' of the ribose to form the product. After dissociation, two additional enzymatic reactions on the tRNA convert PreQ1 to queuine (Q), resulting in the hypermodified nucleoside queuosine (7-(((4,5-cis-dihydroxy-2-cyclopenten-1-yl)amino)methyl)-7-deazaguanosine). The polypeptide is Queuine tRNA-ribosyltransferase (Actinobacillus pleuropneumoniae serotype 5b (strain L20)).